The following is a 426-amino-acid chain: Glutamate-1-semialdehyde 2,1-aminomutase (426 aa).

Residue Lys-265 is modified to N6-(pyridoxal phosphate)lysine.

Belongs to the class-III pyridoxal-phosphate-dependent aminotransferase family. HemL subfamily. In terms of assembly, homodimer. The cofactor is pyridoxal 5'-phosphate.

The protein resides in the cytoplasm. The catalysed reaction is (S)-4-amino-5-oxopentanoate = 5-aminolevulinate. It participates in porphyrin-containing compound metabolism; protoporphyrin-IX biosynthesis; 5-aminolevulinate from L-glutamyl-tRNA(Glu): step 2/2. In Salmonella arizonae (strain ATCC BAA-731 / CDC346-86 / RSK2980), this protein is Glutamate-1-semialdehyde 2,1-aminomutase.